A 218-amino-acid chain; its full sequence is Peptide methionine sulfoxide reductase MsrA (218 aa).

Residue Cys54 is part of the active site.

This sequence belongs to the MsrA Met sulfoxide reductase family.

It catalyses the reaction L-methionyl-[protein] + [thioredoxin]-disulfide + H2O = L-methionyl-(S)-S-oxide-[protein] + [thioredoxin]-dithiol. It carries out the reaction [thioredoxin]-disulfide + L-methionine + H2O = L-methionine (S)-S-oxide + [thioredoxin]-dithiol. In terms of biological role, has an important function as a repair enzyme for proteins that have been inactivated by oxidation. Catalyzes the reversible oxidation-reduction of methionine sulfoxide in proteins to methionine. The chain is Peptide methionine sulfoxide reductase MsrA from Azorhizobium caulinodans (strain ATCC 43989 / DSM 5975 / JCM 20966 / LMG 6465 / NBRC 14845 / NCIMB 13405 / ORS 571).